A 163-amino-acid polypeptide reads, in one-letter code: Peptidyl-prolyl cis-trans isomerase-like 1 (163 aa).

Positions 1-155 (MATDVAVETT…TEVKIVKARV (155 aa)) constitute a PPIase cyclophilin-type domain.

This sequence belongs to the cyclophilin-type PPIase family. PPIL1 subfamily.

The catalysed reaction is [protein]-peptidylproline (omega=180) = [protein]-peptidylproline (omega=0). Its function is as follows. PPIases accelerate the folding of proteins. It catalyzes the cis-trans isomerization of proline imidic peptide bonds in oligopeptides. The protein is Peptidyl-prolyl cis-trans isomerase-like 1 (ppi-1) of Neurospora crassa (strain ATCC 24698 / 74-OR23-1A / CBS 708.71 / DSM 1257 / FGSC 987).